The primary structure comprises 514 residues: Cholesterol side-chain cleavage enzyme, mitochondrial (514 aa).

The N-terminal 39 residues, 1-39 (MMVSWSVCRSSLALPACGLPSARHNSSMPVVRQALSPDN), are a transit peptide targeting the mitochondrion. Residue Cys458 participates in heme binding.

Belongs to the cytochrome P450 family. It depends on heme as a cofactor. As to expression, in the ovary, not found in early vitellogenic follicles, barely detected in postvitellogenic follicles and abundant in post-ovulatory follicles.

Its subcellular location is the mitochondrion inner membrane. It catalyses the reaction 6 reduced [adrenodoxin] + cholesterol + 3 O2 + 6 H(+) = 4-methylpentanal + pregnenolone + 6 oxidized [adrenodoxin] + 4 H2O. The protein operates within lipid metabolism; C21-steroid hormone metabolism. Its function is as follows. Catalyzes the side-chain cleavage reaction of cholesterol to pregnenolone, the precursor of most steroid hormones. This chain is Cholesterol side-chain cleavage enzyme, mitochondrial (cyp11a1), found in Oncorhynchus mykiss (Rainbow trout).